Here is an 806-residue protein sequence, read N- to C-terminus: Sperm head and tail associated protein (806 aa).

4 disordered regions span residues methionine 1–cysteine 36, threonine 257–serine 329, leucine 428–proline 496, and serine 707–lysine 806. Residues alanine 13–serine 27 are compositionally biased toward polar residues. The segment covering proline 277–proline 290 has biased composition (low complexity). Polar residues predominate over residues leucine 320–serine 329. The segment at lysine 521–lysine 806 is interaction with CRISP2. Low complexity-rich tracts occupy residues asparagine 710–serine 723 and arginine 733–glutamine 754. Positions glutamine 773 to serine 788 are enriched in polar residues.

In terms of assembly, interacts with CRISP2. As to expression, isoforms 3 and 4 are expressed in testis (at protein level).

It is found in the cytoplasm. Its function is as follows. Plays a role during spermatogenesis. The chain is Sperm head and tail associated protein (Nsun4) from Mus musculus (Mouse).